The primary structure comprises 101 residues: Small ribosomal subunit protein uS14 (101 aa).

Belongs to the universal ribosomal protein uS14 family. As to quaternary structure, part of the 30S ribosomal subunit. Contacts proteins S3 and S10.

Its function is as follows. Binds 16S rRNA, required for the assembly of 30S particles and may also be responsible for determining the conformation of the 16S rRNA at the A site. In Ehrlichia ruminantium (strain Welgevonden), this protein is Small ribosomal subunit protein uS14.